We begin with the raw amino-acid sequence, 348 residues long: Holliday junction branch migration complex subunit RuvB (348 aa).

Positions 1–183 are large ATPase domain (RuvB-L); it reads MTDPSRLVTP…FGIPVRLNFY (183 aa). ATP contacts are provided by residues Leu-22, Arg-23, Gly-64, Lys-67, Thr-68, Thr-69, 130 to 132, Arg-173, Tyr-183, and Arg-220; that span reads EDF. Thr-68 is a binding site for Mg(2+). A small ATPAse domain (RuvB-S) region spans residues 184–254; it reads TIEELESIVS…IADHALGALE (71 aa). Residues 257-348 are head domain (RuvB-H); sequence AAGLDAMDRR…FGLFGGEEEA (92 aa). DNA contacts are provided by Arg-293, Arg-312, and Arg-317.

Belongs to the RuvB family. As to quaternary structure, homohexamer. Forms an RuvA(8)-RuvB(12)-Holliday junction (HJ) complex. HJ DNA is sandwiched between 2 RuvA tetramers; dsDNA enters through RuvA and exits via RuvB. An RuvB hexamer assembles on each DNA strand where it exits the tetramer. Each RuvB hexamer is contacted by two RuvA subunits (via domain III) on 2 adjacent RuvB subunits; this complex drives branch migration. In the full resolvosome a probable DNA-RuvA(4)-RuvB(12)-RuvC(2) complex forms which resolves the HJ.

It is found in the cytoplasm. It carries out the reaction ATP + H2O = ADP + phosphate + H(+). In terms of biological role, the RuvA-RuvB-RuvC complex processes Holliday junction (HJ) DNA during genetic recombination and DNA repair, while the RuvA-RuvB complex plays an important role in the rescue of blocked DNA replication forks via replication fork reversal (RFR). RuvA specifically binds to HJ cruciform DNA, conferring on it an open structure. The RuvB hexamer acts as an ATP-dependent pump, pulling dsDNA into and through the RuvAB complex. RuvB forms 2 homohexamers on either side of HJ DNA bound by 1 or 2 RuvA tetramers; 4 subunits per hexamer contact DNA at a time. Coordinated motions by a converter formed by DNA-disengaged RuvB subunits stimulates ATP hydrolysis and nucleotide exchange. Immobilization of the converter enables RuvB to convert the ATP-contained energy into a lever motion, pulling 2 nucleotides of DNA out of the RuvA tetramer per ATP hydrolyzed, thus driving DNA branch migration. The RuvB motors rotate together with the DNA substrate, which together with the progressing nucleotide cycle form the mechanistic basis for DNA recombination by continuous HJ branch migration. Branch migration allows RuvC to scan DNA until it finds its consensus sequence, where it cleaves and resolves cruciform DNA. The polypeptide is Holliday junction branch migration complex subunit RuvB (Rhodopseudomonas palustris (strain HaA2)).